A 430-amino-acid polypeptide reads, in one-letter code: Lipoyl synthase, mitochondrial (430 aa).

The transit peptide at 1 to 37 (MAASTGKLRTLFSAHSSLSARPSSALPALRLTILRSY) directs the protein to the mitochondrion. The segment covering 40 to 56 (TTPPDSSISDPSNSSTT) has biased composition (low complexity). A disordered region spans residues 40-63 (TTPPDSSISDPSNSSTTVKRPPTA). Residues Cys141, Cys146, Cys152, Cys172, Cys176, Cys179, and Ser387 each coordinate [4Fe-4S] cluster. Residues 155-376 (GSSKSAATAT…KERALEMGFL (222 aa)) form the Radical SAM core domain.

Belongs to the radical SAM superfamily. Lipoyl synthase family. [4Fe-4S] cluster is required as a cofactor.

It localises to the mitochondrion. The enzyme catalyses [[Fe-S] cluster scaffold protein carrying a second [4Fe-4S](2+) cluster] + N(6)-octanoyl-L-lysyl-[protein] + 2 oxidized [2Fe-2S]-[ferredoxin] + 2 S-adenosyl-L-methionine + 4 H(+) = [[Fe-S] cluster scaffold protein] + N(6)-[(R)-dihydrolipoyl]-L-lysyl-[protein] + 4 Fe(3+) + 2 hydrogen sulfide + 2 5'-deoxyadenosine + 2 L-methionine + 2 reduced [2Fe-2S]-[ferredoxin]. It functions in the pathway protein modification; protein lipoylation via endogenous pathway; protein N(6)-(lipoyl)lysine from octanoyl-[acyl-carrier-protein]: step 2/2. In terms of biological role, catalyzes the radical-mediated insertion of two sulfur atoms into the C-6 and C-8 positions of the octanoyl moiety bound to the lipoyl domains of lipoate-dependent enzymes, thereby converting the octanoylated domains into lipoylated derivatives. This Ajellomyces dermatitidis (strain ER-3 / ATCC MYA-2586) (Blastomyces dermatitidis) protein is Lipoyl synthase, mitochondrial.